The primary structure comprises 491 residues: UDP-N-acetylmuramate--L-alanine ligase (491 aa).

126–132 (GTHGKTT) contacts ATP.

The protein belongs to the MurCDEF family.

It is found in the cytoplasm. The enzyme catalyses UDP-N-acetyl-alpha-D-muramate + L-alanine + ATP = UDP-N-acetyl-alpha-D-muramoyl-L-alanine + ADP + phosphate + H(+). It participates in cell wall biogenesis; peptidoglycan biosynthesis. In terms of biological role, cell wall formation. The chain is UDP-N-acetylmuramate--L-alanine ligase from Escherichia coli (strain SMS-3-5 / SECEC).